Here is a 62-residue protein sequence, read N- to C-terminus: Rubredoxin-2 (62 aa).

The 52-residue stretch at 7–58 (MWRCQMVNCGYVYDPDRGDKRRKVPAGTKFEDLPEDWRCPVCGAGKKSFRRL) folds into the Rubredoxin-like domain. Fe cation contacts are provided by Cys-10, Cys-15, Cys-45, and Cys-48.

This sequence belongs to the rubredoxin family. As to quaternary structure, monomer. It depends on Fe(3+) as a cofactor.

Rubredoxin is a small nonheme, iron protein lacking acid-labile sulfide. Its single Fe, chelated to 4 Cys, functions as an electron acceptor and may also stabilize the conformation of the molecule. This Desulfovibrio desulfuricans (strain ATCC 27774 / DSM 6949 / MB) protein is Rubredoxin-2 (rd2).